The following is a 142-amino-acid chain: Cytochrome c-type biogenesis protein CcmE (142 aa).

Residues 1 to 2 (MK) are Cytoplasmic-facing. Residues 3-23 (GKYLLGILVILGALGYMVFGG) form a helical; Signal-anchor for type II membrane protein membrane-spanning segment. Over 24-142 (LGRNLVYFLT…EVRKLIEEAQ (119 aa)) the chain is Periplasmic. Heme-binding residues include histidine 118 and tyrosine 122.

Belongs to the CcmE/CycJ family.

It is found in the cell inner membrane. Its function is as follows. Heme chaperone required for the biogenesis of c-type cytochromes. Transiently binds heme delivered by CcmC and transfers the heme to apo-cytochromes in a process facilitated by CcmF and CcmH. The chain is Cytochrome c-type biogenesis protein CcmE from Thermus thermophilus (strain ATCC BAA-163 / DSM 7039 / HB27).